The sequence spans 338 residues: MTASLSAPAIGILAVGAYAPAAVITNAHYATRLDTSDDWITSRTGIRERRHAAPDESSSVLGIRATQDLAGRFPGALDGVNLVICATSSPDAMFPSTAALIAGGTGLRGAAAFDVSVACSGFLYALSVGYGMIRAGLAKKALIVGSEVMSGAVDQNDRNTAILFGDGAGCVVIGEVPQGYGFQSFVLGADSAGGPHLYLRGAALRLPEGTEMGPHLTQNGREVFKFAVRTLGDSAEQAMRQAGKTTADIDWLVPHQANIRIIEAACERFGLPIERAVTNLDRYGNTSAASIPLALAEAQAQGRFKDGDQLLLAGFGGGLSWGAAALKWWSGPTGKQSS.

Catalysis depends on residues cysteine 119 and histidine 255. Residues 256 to 260 (QANIR) form an ACP-binding region. Asparagine 285 is a catalytic residue.

The protein belongs to the thiolase-like superfamily. FabH family. As to quaternary structure, homodimer.

The protein localises to the cytoplasm. The enzyme catalyses malonyl-[ACP] + acetyl-CoA + H(+) = 3-oxobutanoyl-[ACP] + CO2 + CoA. The protein operates within lipid metabolism; fatty acid biosynthesis. Functionally, catalyzes the condensation reaction of fatty acid synthesis by the addition to an acyl acceptor of two carbons from malonyl-ACP. Catalyzes the first condensation reaction which initiates fatty acid synthesis and may therefore play a role in governing the total rate of fatty acid production. Possesses both acetoacetyl-ACP synthase and acetyl transacylase activities. Its substrate specificity determines the biosynthesis of branched-chain and/or straight-chain of fatty acids. The protein is Beta-ketoacyl-[acyl-carrier-protein] synthase III 2 of Deinococcus radiodurans (strain ATCC 13939 / DSM 20539 / JCM 16871 / CCUG 27074 / LMG 4051 / NBRC 15346 / NCIMB 9279 / VKM B-1422 / R1).